The chain runs to 473 residues: ATP synthase subunit beta (473 aa).

158–165 contacts ATP; it reads GGAGVGKT.

It belongs to the ATPase alpha/beta chains family. F-type ATPases have 2 components, CF(1) - the catalytic core - and CF(0) - the membrane proton channel. CF(1) has five subunits: alpha(3), beta(3), gamma(1), delta(1), epsilon(1). CF(0) has three main subunits: a(1), b(2) and c(9-12). The alpha and beta chains form an alternating ring which encloses part of the gamma chain. CF(1) is attached to CF(0) by a central stalk formed by the gamma and epsilon chains, while a peripheral stalk is formed by the delta and b chains.

Its subcellular location is the cell membrane. The catalysed reaction is ATP + H2O + 4 H(+)(in) = ADP + phosphate + 5 H(+)(out). In terms of biological role, produces ATP from ADP in the presence of a proton gradient across the membrane. The catalytic sites are hosted primarily by the beta subunits. The protein is ATP synthase subunit beta of Geobacillus thermodenitrificans (strain NG80-2).